Reading from the N-terminus, the 734-residue chain is Fc receptor-like protein 3 (734 aa).

The signal sequence occupies residues 1-17; the sequence is MLLWLLLLILTPGREQS. Topologically, residues 18 to 573 are extracellular; that stretch reads GVAPKAVLLL…GTSRNRTGLT (556 aa). 6 Ig-like C2-type domains span residues 21-98, 99-182, 192-270, 284-369, 383-470, and 476-563; these read PKAV…VEFS, PDWL…KPLN, PVLR…HSIK, PVSN…PILS, PVLT…LRVT, and PVLT…LNVT. 6 disulfides stabilise this stretch: Cys44–Cys82, Cys120–Cys163, Cys211–Cys260, Cys309–Cys358, Cys404–Cys451, and Cys497–Cys544. The N-linked (GlcNAc...) asparagine glycan is linked to Asn561. A helical transmembrane segment spans residues 574–594; it reads AAGITGLVLSILVLAAAAALL. Topologically, residues 595-734 are cytoplasmic; that stretch reads HYARARRKPG…VPRVLLASDH (140 aa). The interval 603–655 is disordered; that stretch reads PGGLSATGTSSHSPSECQEPSSSRPSRIDPQEPTHSKPLAPMELEPMYSNVNP. A compositionally biased stretch (polar residues) spans 608-627; that stretch reads ATGTSSHSPSECQEPSSSRP. Positions 628–637 are enriched in basic and acidic residues; that stretch reads SRIDPQEPTH. 4 consecutive short sequence motifs (ITIM motif) follow at residues 648–653, 660–665, 690–695, and 720–725; these read PMYSNV, PIYSQI, VLYSEL, and ENYENV. A phosphotyrosine mark is found at Tyr650, Tyr662, Tyr692, and Tyr722. Residues 695-734 are disordered; sequence LKKTHPDDSAGEASSRGRAHEEDDEENYENVPRVLLASDH.

As to quaternary structure, interacts (via phosphorylated ITIM motifs) with phosphatases INPP5D, PTPN6 and PTPN11. Interacts (via ITIM motifs) SYK and ZAP70. Interacts with IZUMO1R/JUNO. Interacts (via extracellular domain) with IZUMO1; the interaction replaces IZUMO1R/JUNO as IZUMO1 receptor after adhesion between sperm and egg. Post-translationally, phosphorylated on cytoplasmic tyrosines; required for interaction with protein tyrosine phosphatases and protein tyrosine kinases. In terms of tissue distribution, primarily expressed in secondary lymphoid tissues by mature subsets of B-cells. Low expression on transitional B cells which increases to higher surface expression on mature and memory B-cells with innate-like features (at protein level). Expressed a low levels in naive and germinal center B-cells but also expressed in NK cells (at protein level). Expressed in unfertilized oocytes (at protein level). Expressed in a population of thymically derived naturally occurring regulatory T-cells that exhibits a memory phenotype, specialized in suppressing immune response to self-antigens. Detected in spleen, lymph node, peripheral blood lymphocytes, thymus, bone marrow, kidney, salivary gland, adrenal gland and uterus.

It is found in the cell membrane. The protein resides in the cell projection. Its subcellular location is the microvillus membrane. Functionally, promotes TLR9-induced B-cell proliferation, activation and survival but inhibits antibody production and suppresses plasma cell differentiation. Enhances activation of NF-kappa-B and MAPK signaling pathways in TLR9 stimulated B-cells. Has inhibitory potentional on B-cell receptor (BCR)-mediated signaling, possibly through association with SH2 domain-containing phosphatases. Inhibits cell tyrosine phosphorylation, calcium mobilization and activation-induced cell death induced through BCR signaling. Regulatory T-cells expressing FCRL3 exhibit a memory phenotype, are relatively nonresponsive to antigenic stimulation in presence of IL2 and have reduced capacity to suppress the proliferation of effector T-cells. Acts as a human-specific epitope on the cell surface of oocytes (oolemma) and plays a role during sperm-egg adhesion and fusion. Interacts with the IZUMO1-IZUMO1R/JUNO sperm-egg complex and replaces IZUMO1R/JUNO as IZUMO1 receptor during fertilization, thereby permitting species-specific gamete fusion. In Homo sapiens (Human), this protein is Fc receptor-like protein 3.